A 102-amino-acid polypeptide reads, in one-letter code: Antimicrobial peptide 1 (102 aa).

The signal sequence occupies residues 1–26 (MASTKLFFSVITVMMLIAMASEMVNG). 3 cysteine pairs are disulfide-bonded: C37-C90, C47-C102, and C49-C75.

It localises to the secreted. Antimicrobial peptide which inhibits the growth of a variety of fungi, oomycetes, Gram-positive bacterial phytopatogenes and S.cerevisiae in vitro. No activity against E.coli. The protein is Antimicrobial peptide 1 of Macadamia integrifolia (Macadamia nut).